Reading from the N-terminus, the 348-residue chain is Phenylalanine--tRNA ligase alpha subunit (348 aa).

A Mg(2+)-binding site is contributed by glutamate 262.

Belongs to the class-II aminoacyl-tRNA synthetase family. Phe-tRNA synthetase alpha subunit type 1 subfamily. Tetramer of two alpha and two beta subunits. It depends on Mg(2+) as a cofactor.

The protein resides in the cytoplasm. It carries out the reaction tRNA(Phe) + L-phenylalanine + ATP = L-phenylalanyl-tRNA(Phe) + AMP + diphosphate + H(+). In Streptococcus pneumoniae (strain 70585), this protein is Phenylalanine--tRNA ligase alpha subunit.